Consider the following 179-residue polypeptide: Large ribosomal subunit protein uL10 (179 aa).

Belongs to the universal ribosomal protein uL10 family. Part of the ribosomal stalk of the 50S ribosomal subunit. The N-terminus interacts with L11 and the large rRNA to form the base of the stalk. The C-terminus forms an elongated spine to which L12 dimers bind in a sequential fashion forming a multimeric L10(L12)X complex.

In terms of biological role, forms part of the ribosomal stalk, playing a central role in the interaction of the ribosome with GTP-bound translation factors. The protein is Large ribosomal subunit protein uL10 of Thermomicrobium roseum (strain ATCC 27502 / DSM 5159 / P-2).